A 171-amino-acid polypeptide reads, in one-letter code: AP-3 complex subunit sigma (171 aa).

Belongs to the adaptor complexes small subunit family. Adaptor protein complex 3 (AP-3) is a heterotetramer composed of two large adaptins (delta-type subunit and beta-type subunit), a medium adaptin (mu-type subunit) and a small adaptin (sigma-type subunit).

It localises to the endosome membrane. In terms of biological role, part of the AP-3 complex, an adaptor-related complex which is essential for the compartmentalization of the endocytic pathway. The polypeptide is AP-3 complex subunit sigma (ap3s1) (Dictyostelium discoideum (Social amoeba)).